A 51-amino-acid polypeptide reads, in one-letter code: Ribosome biogenesis protein Nop10 (51 aa).

Belongs to the NOP10 family.

Its function is as follows. Involved in ribosome biogenesis; more specifically in 18S rRNA pseudouridylation and in cleavage of pre-rRNA. This Methanosarcina barkeri (strain Fusaro / DSM 804) protein is Ribosome biogenesis protein Nop10.